Reading from the N-terminus, the 64-residue chain is Large ribosomal subunit protein bL35 (64 aa).

The protein belongs to the bacterial ribosomal protein bL35 family.

In Pseudomonas putida (strain W619), this protein is Large ribosomal subunit protein bL35.